The chain runs to 31 residues: Photosystem II reaction center protein Psb30 (31 aa).

A helical transmembrane segment spans residues isoleucine 5–phenylalanine 25.

This sequence belongs to the Psb30/Ycf12 family. As to quaternary structure, PSII is composed of 1 copy each of membrane proteins PsbA, PsbB, PsbC, PsbD, PsbE, PsbF, PsbH, PsbI, PsbJ, PsbK, PsbL, PsbM, PsbT, PsbX, PsbY, PsbZ, Psb30/Ycf12, peripheral proteins of the oxygen-evolving complex and a large number of cofactors. It forms dimeric complexes.

Its subcellular location is the plastid. The protein localises to the chloroplast thylakoid membrane. In terms of biological role, a core subunit of photosystem II (PSII), probably helps stabilize the reaction center. This Phacus acuminatus protein is Photosystem II reaction center protein Psb30.